Here is a 196-residue protein sequence, read N- to C-terminus: Glycerol-3-phosphate acyltransferase (196 aa).

6 helical membrane-spanning segments follow: residues 5–25, 53–73, 80–100, 107–127, 130–150, and 153–173; these read VYLL…IIFC, FSAL…VLLA, PSEI…PLFF, GVAT…AAGL, WLIV…TALI, and FYIW…CCLL.

The protein belongs to the PlsY family. In terms of assembly, probably interacts with PlsX.

Its subcellular location is the cell inner membrane. The enzyme catalyses an acyl phosphate + sn-glycerol 3-phosphate = a 1-acyl-sn-glycero-3-phosphate + phosphate. Its pathway is lipid metabolism; phospholipid metabolism. Functionally, catalyzes the transfer of an acyl group from acyl-phosphate (acyl-PO(4)) to glycerol-3-phosphate (G3P) to form lysophosphatidic acid (LPA). This enzyme utilizes acyl-phosphate as fatty acyl donor, but not acyl-CoA or acyl-ACP. In Actinobacillus pleuropneumoniae serotype 7 (strain AP76), this protein is Glycerol-3-phosphate acyltransferase.